A 411-amino-acid chain; its full sequence is LL-diaminopimelate aminotransferase (411 aa).

Residues Tyr15 and Gly42 each contribute to the substrate site. Pyridoxal 5'-phosphate is bound by residues Tyr72, 108–109 (AK), Tyr132, Asn187, Tyr218, and 246–248 (SFS). Residues Lys109, Tyr132, and Asn187 each coordinate substrate. Lys249 carries the post-translational modification N6-(pyridoxal phosphate)lysine. Residues Arg257 and Asn292 each coordinate pyridoxal 5'-phosphate. The substrate site is built by Asn292 and Arg388.

This sequence belongs to the class-I pyridoxal-phosphate-dependent aminotransferase family. LL-diaminopimelate aminotransferase subfamily. In terms of assembly, homodimer. Pyridoxal 5'-phosphate serves as cofactor.

It carries out the reaction (2S,6S)-2,6-diaminopimelate + 2-oxoglutarate = (S)-2,3,4,5-tetrahydrodipicolinate + L-glutamate + H2O + H(+). It participates in amino-acid biosynthesis; L-lysine biosynthesis via DAP pathway; LL-2,6-diaminopimelate from (S)-tetrahydrodipicolinate (aminotransferase route): step 1/1. Involved in the synthesis of meso-diaminopimelate (m-DAP or DL-DAP), required for both lysine and peptidoglycan biosynthesis. Catalyzes the direct conversion of tetrahydrodipicolinate to LL-diaminopimelate. This Crocosphaera subtropica (strain ATCC 51142 / BH68) (Cyanothece sp. (strain ATCC 51142)) protein is LL-diaminopimelate aminotransferase.